The chain runs to 157 residues: Small ribosomal subunit protein bS6 (157 aa).

A compositionally biased stretch (basic and acidic residues) spans 96-151; that stretch reads HEEGPSAMMRKADRDRDRDERGGGGFRGDREGGFRGDREGGGFRGDRGPRRPRDDA. Residues 96 to 157 form a disordered region; that stretch reads HEEGPSAMMR…RDDAPAATEE (62 aa).

The protein belongs to the bacterial ribosomal protein bS6 family.

In terms of biological role, binds together with bS18 to 16S ribosomal RNA. The protein is Small ribosomal subunit protein bS6 of Rhodopseudomonas palustris (strain BisA53).